Here is a 402-residue protein sequence, read N- to C-terminus: Methylthioribose-1-phosphate isomerase (402 aa).

The active-site Proton donor is the Asp-275.

Belongs to the eIF-2B alpha/beta/delta subunits family. MtnA subfamily.

It localises to the cytoplasm. The protein resides in the nucleus. It carries out the reaction 5-(methylsulfanyl)-alpha-D-ribose 1-phosphate = 5-(methylsulfanyl)-D-ribulose 1-phosphate. Its pathway is amino-acid biosynthesis; L-methionine biosynthesis via salvage pathway; L-methionine from S-methyl-5-thio-alpha-D-ribose 1-phosphate: step 1/6. In terms of biological role, catalyzes the interconversion of methylthioribose-1-phosphate (MTR-1-P) into methylthioribulose-1-phosphate (MTRu-1-P). The sequence is that of Methylthioribose-1-phosphate isomerase from Clavispora lusitaniae (strain ATCC 42720) (Yeast).